Here is a 95-residue protein sequence, read N- to C-terminus: Scytovirin (95 aa).

The segment at 3-41 (GPTYCWNEANNPGGPNRCSNNKQCDGARTCSSSGFCQGT) is SD1. Cystine bridges form between Cys7–Cys55, Cys20–Cys32, Cys26–Cys38, Cys68–Cys80, and Cys74–Cys86. The interval 51 to 89 (GPTYCWDEAKNPGGPNRCSNSKQCDGARTCSSSGFCQGT) is SD2.

Has strong anti-HIV activity against T-tropic strains of HIV-1 and weaker activity against M-tropic strains of HIV-1. Inhibits HIV-1 fusion and infection of CD4 LTR beta-gal cells in vitro. Inhibits fusion of HIV infected CEM-SS cells with uninfected CEM-SS cells, and fusion of HIV-1 Env expressing HL2/3 cells with CD4 LTR beta-gal cells. Binds to HIV gp120, HIV gp160 and to a lesser extent HIV gp41. Binding to HIV gp120 is glycosylation dependent. Binds with high specificity to the tetrasaccharide Man-alpha-1,2-Man-alpha-1,6-Man-alpha-1,6-Man and also binds the higher-order oligosaccharides oligomannose 8 and oligomannose 9. Does not bind to monosaccharides, complex or hybrid N-linked oligosaccharides or chitin. The polypeptide is Scytovirin (Scytonema varium).